Reading from the N-terminus, the 400-residue chain is Jasmonate-induced oxygenase 1 (400 aa).

In terms of domain architecture, Fe2OG dioxygenase spans 248–349; the sequence is DVGACLRVNY…RVSLAFFYNP (102 aa). R254 contributes to the jasmonate binding site. N256 and Y258 together coordinate 2-oxoglutarate. Residues H273, D275, and H330 each coordinate Fe cation. 2-oxoglutarate is bound by residues R340 and S342. Positions 379 and 383 each coordinate jasmonate.

The protein belongs to the iron/ascorbate-dependent oxidoreductase family. It depends on L-ascorbate as a cofactor. Fe(2+) is required as a cofactor.

The catalysed reaction is jasmonate + 2-oxoglutarate + O2 = (1R,2R)-12-hydroxyjasmonate + succinate + CO2. In terms of biological role, 2-oxoglutarate-dependent dioxygenase involved in the oxidation of jasmonate (JA), a stress-induced phytohormone synthesized in response to attack by pathogens and herbivores, which triggers the activation of defense responses via the JA-mediated signaling pathway. Converts JA to 12-hydroxyjasmonate (12OH-JA), an inactive form of JA. Prevents over-accumulation of JA and indirectly its bioactive form JA-Ile under stress response. Acts as a negative regulator of JA-mediated defense signaling, by contributing to 12OH-JA accumulation, which represses JA defense responses upon infection by the fungal pathogen Botrytis cinerea and the herbivorous caterpillar Mamestra brassicae. This Arabidopsis thaliana (Mouse-ear cress) protein is Jasmonate-induced oxygenase 1.